A 123-amino-acid polypeptide reads, in one-letter code: Angiogenin-2 (123 aa).

The residue at position 1 (glutamine 1) is a Pyrrolidone carboxylic acid. Histidine 12 serves as the catalytic Proton acceptor. Intrachain disulfides connect cysteine 25–cysteine 80, cysteine 38–cysteine 91, and cysteine 56–cysteine 106. The Nucleolar localization signal motif lies at glutamate 30–methionine 34. The N-linked (GlcNAc...) asparagine glycan is linked to asparagine 33. Zn(2+) contacts are provided by aspartate 40, histidine 82, and histidine 113. Histidine 113 serves as the catalytic Proton donor.

The protein belongs to the pancreatic ribonuclease family. Serum and milk.

It localises to the cytoplasmic vesicle. The protein localises to the secretory vesicle lumen. The protein resides in the secreted. Its subcellular location is the nucleus. It is found in the nucleolus. Its activity is regulated as follows. Divalent metal ions, such as Cu2+ and Zn2+, may inhibit the ribonucleolytic activity. Its function is as follows. Binds tightly to placental ribonuclease inhibitor and has very low ribonuclease activity. Has potent angiogenic activity. Angiogenin induces vascularization of normal and malignant tissues. Abolishes protein synthesis by specifically hydrolyzing cellular tRNAs. The chain is Angiogenin-2 from Bos taurus (Bovine).